Consider the following 305-residue polypeptide: Dihydroorotate dehydrogenase B (NAD(+)), catalytic subunit (305 aa).

Residues Ser-23 and 47–48 (KG) each bind FMN. Substrate-binding positions include Lys-47 and 71–75 (NAIGL). The FMN site is built by Asn-101 and Asn-129. Residue Asn-129 coordinates substrate. Catalysis depends on Cys-132, which acts as the Nucleophile. Positions 167 and 193 each coordinate FMN. A substrate-binding site is contributed by 194–195 (NT). Residues Gly-219, 245 to 246 (GG), and 267 to 268 (GT) contribute to the FMN site.

Belongs to the dihydroorotate dehydrogenase family. Type 1 subfamily. Heterotetramer of 2 PyrK and 2 PyrD type B subunits. FMN serves as cofactor.

It localises to the cytoplasm. The catalysed reaction is (S)-dihydroorotate + NAD(+) = orotate + NADH + H(+). It functions in the pathway pyrimidine metabolism; UMP biosynthesis via de novo pathway; orotate from (S)-dihydroorotate (NAD(+) route): step 1/1. In terms of biological role, catalyzes the conversion of dihydroorotate to orotate with NAD(+) as electron acceptor. The chain is Dihydroorotate dehydrogenase B (NAD(+)), catalytic subunit (pyrD) from Geotalea uraniireducens (strain Rf4) (Geobacter uraniireducens).